Reading from the N-terminus, the 578-residue chain is Probable arginine--tRNA ligase, mitochondrial (578 aa).

Residues 1 to 16 (MACGFRRSIASQLSRV) constitute a mitochondrion transit peptide. Residues 133–135 (SPN), histidine 144, tyrosine 322, aspartate 326, and glutamine 350 contribute to the L-arginine site. The 'HIGH' region motif lies at 133-144 (SPNVAKKFHVGH). Residue lysine 568 is modified to N6-acetyllysine.

The protein belongs to the class-I aminoacyl-tRNA synthetase family.

It is found in the mitochondrion membrane. It catalyses the reaction tRNA(Arg) + L-arginine + ATP = L-arginyl-tRNA(Arg) + AMP + diphosphate. Functionally, catalyzes the attachment of arginine to tRNA(Arg) in a two-step reaction: arginine is first activated by ATP to form Arg-AMP and then transferred to the acceptor end of tRNA(Arg). In Bos taurus (Bovine), this protein is Probable arginine--tRNA ligase, mitochondrial (RARS2).